The following is a 563-amino-acid chain: (-)-germacrene D synthase (563 aa).

A coiled-coil region spans residues 44–71 (TEITAAEKEELEKQKEKVKNLLDQTPND). Aspartate 314 and aspartate 318 together coordinate Mn(2+). A DDXXD motif motif is present at residues 314-318 (DDIYD). Homodimerization stretches follow at residues 320–326 (YGSLDEL) and 392–429 (EAEW…VGME). 2 residues coordinate Mn(2+): aspartate 459 and glutamate 467.

The protein belongs to the terpene synthase family. In terms of assembly, homodimer. Mn(2+) is required as a cofactor. The cofactor is Mg(2+). Expressed in peltate glandular trichomes. Present at low levels in flowers, leaves and stems.

The catalysed reaction is (2E,6E)-farnesyl diphosphate = (-)-germacrene D + diphosphate. Its pathway is secondary metabolite biosynthesis; terpenoid biosynthesis. Functionally, involved in the biosynthesis of phenolic sesquiterpenes natural products. Sesquiterpene synthase that catalyzes mainly the formation of (-)-germacrene D and minor amounts of other sesquiterpenes (e.g. bicyclo-germacrene) from farnesyl diphosphate (FPP). Also triggers moderate amounts formation of myrcene, limonene, terpinolene and linalool in the presence of geranyl diphosphate (GPP). This Origanum vulgare (Wild marjoram) protein is (-)-germacrene D synthase.